The chain runs to 173 residues: Lipoprotein signal peptidase (173 aa).

The next 4 membrane-spanning stretches (helical) occupy residues 7–27 (FFWF…LWVV), 41–61 (LWPG…FSLF), 70–90 (WLSL…PNFN), and 95–115 (AGYG…FVAG). Active-site residues include Asp-119 and Asp-135. Residues 130–150 (IFNLADVFINIGIICLLIAAW) traverse the membrane as a helical segment.

This sequence belongs to the peptidase A8 family.

It is found in the cell inner membrane. The enzyme catalyses Release of signal peptides from bacterial membrane prolipoproteins. Hydrolyzes -Xaa-Yaa-Zaa-|-(S,diacylglyceryl)Cys-, in which Xaa is hydrophobic (preferably Leu), and Yaa (Ala or Ser) and Zaa (Gly or Ala) have small, neutral side chains.. It functions in the pathway protein modification; lipoprotein biosynthesis (signal peptide cleavage). Functionally, this protein specifically catalyzes the removal of signal peptides from prolipoproteins. The sequence is that of Lipoprotein signal peptidase from Cyanothece sp. (strain PCC 7425 / ATCC 29141).